A 937-amino-acid chain; its full sequence is Inactive tyrosine-protein kinase transmembrane receptor ROR1 (937 aa).

The first 29 residues, 1–29 (MHRPRRRGTRPPPLALLAALLLAARGADA), serve as a signal peptide directing secretion. Over 30 to 406 (QETELSVSAE…KEKNKMEILY (377 aa)) the chain is Extracellular. An Ig-like C2-type domain is found at 42 to 141 (PTSSWNTSSE…VATNGKKVVS (100 aa)). N-linked (GlcNAc...) asparagine glycans are attached at residues N47 and N66. Intrachain disulfides connect C79-C131, C170-C235, C178-C228, C219-C260, C248-C296, C252-C282, C313-C391, C334-C374, and C362-C386. An FZ domain is found at 165 to 299 (EEDGFCQPYR…SPEAANCIRI (135 aa)). A glycan (N-linked (GlcNAc...) asparagine) is linked at N184. The Kringle domain occupies 312–391 (KCYNSTGVDY…KSDLCDIPAC (80 aa)). Residue N315 is glycosylated (N-linked (GlcNAc...) asparagine). Residues 407-427 (ILVPSVAIPLAIAFLFFFICV) form a helical membrane-spanning segment. The Cytoplasmic segment spans residues 428-937 (CRNNQKSSSP…HTESMISAEV (510 aa)). The Protein kinase domain maps to 473–746 (VRFMEELGEC…PRFKDIHVRL (274 aa)). Residues 479 to 487 (LGECTFGKI) and K506 contribute to the ATP site. Y645 is modified (phosphotyrosine; by autocatalysis). Positions 753–762 (SSHTSSTTPS) are enriched in low complexity. Disordered regions lie at residues 753–778 (SSHT…ASPV), 840–890 (GPPR…HMSI), and 916–937 (QSSL…SAEV). Positions 763–778 (GGNATTQTTSLSASPV) are enriched in polar residues. Positions 854–864 (RSPSSASGSTS) are enriched in low complexity. Residues 865-880 (TGHVASLPSSGSNQEA) are compositionally biased toward polar residues.

It belongs to the protein kinase superfamily. Tyr protein kinase family. ROR subfamily. Interacts with ERBB2 and IGFBP5. At postnatal P0, expressed in heart, lung, liver, kidney, spleen and inner ear.

It localises to the membrane. It is found in the cell projection. The protein localises to the axon. Has very low kinase activity in vitro and is unlikely to function as a tyrosine kinase in vivo. Receptor for ligand WNT5A which activate downstream NFkB signaling pathway and may result in the inhibition of WNT3A-mediated signaling. In inner ear, crucial for spiral ganglion neurons to innervate auditory hair cells. Via IGFBP5 ligand, forms a complex with ERBB2 to enhance CREB oncogenic signaling. The chain is Inactive tyrosine-protein kinase transmembrane receptor ROR1 (Ror1) from Mus musculus (Mouse).